Here is a 280-residue protein sequence, read N- to C-terminus: MATYLIGDVHGCYDELIALLHKVEFTPGKDTLWLTGDLVARGPGSLDVLRYVKSLGDSVRLVLGNHDLHLLAVFAGISRNKPKDRLTPLLEAPDADELLNWLRRQPLLQIDEEKKLVMAHAGITPQWDLKTAKECARDVEAVLSSDSYPFFLDAMYGDMPNNWSPELRGLGRLRFITNAFTRMRFCFPNGQLDMYSKESPEEAPAPLKPWFAIPGPVAEEYSIAFGHWASLEGKGTPEGIYALDTGCCWGGTLTCLRWEDKHYFVQPSNRHKDLGEAAAS.

It belongs to the Ap4A hydrolase family.

The enzyme catalyses P(1),P(4)-bis(5'-adenosyl) tetraphosphate + H2O = 2 ADP + 2 H(+). Its function is as follows. Hydrolyzes diadenosine 5',5'''-P1,P4-tetraphosphate to yield ADP. This is Bis(5'-nucleosyl)-tetraphosphatase, symmetrical from Escherichia coli O17:K52:H18 (strain UMN026 / ExPEC).